Reading from the N-terminus, the 38-residue chain is Large ribosomal subunit protein bL36 (38 aa).

It belongs to the bacterial ribosomal protein bL36 family.

The chain is Large ribosomal subunit protein bL36 from Gemmatimonas aurantiaca (strain DSM 14586 / JCM 11422 / NBRC 100505 / T-27).